The primary structure comprises 472 residues: H(+)/Cl(-) exchange transporter ClcA (472 aa).

Topologically, residues 1–32 (MKAETPSFEAHQFVRVRRGDAVRRLIQRDKTP) are cytoplasmic. Residues 33-69 (LAVLFMAAVVGTLAGLVGVAFEKSVNWVQNQRIGALA) traverse the membrane as a helical segment. Topologically, residues 70-76 (QVADHWY) are periplasmic. A helical membrane pass occupies residues 77 to 100 (LVWPLAFILSALLAMVGYFLVRRF). The short motif at 106 to 110 (GSGIP) is the Selectivity filter part_1 element. Serine 107 serves as a coordination point for chloride. Positions 109–116 (IPEIEGAL) form an intramembrane region, helical. Over 117-123 (EELRPVR) the chain is Cytoplasmic. The next 2 membrane-spanning stretches (helical) occupy residues 124–141 (WWRV…TLGA) and 148–166 (EGPM…LDVF). The short motif at 146-150 (GREGP) is the Selectivity filter part_2 element. The Cytoplasmic segment spans residues 167 to 176 (RMRSPEARHT). Intramembrane regions (helical) lie at residues 177–189 (LLAT…LSAA) and 193–201 (PLAGILFII). Residues 202 to 214 (EEMRPQFRYNLIS) are Cytoplasmic-facing. Residues 215 to 232 (IKAVFTGVIMSSIVFRIF) traverse the membrane as a helical segment. Residues 233–252 (NGEAAIIEVGKLSNAPVNTL) are Periplasmic-facing. The helical transmembrane segment at 253-281 (WLYLVLGMLFGCFGPLFNFLVLRTQDLFQ) threads the bilayer. The Cytoplasmic segment spans residues 282–287 (RIHGGN). The helical transmembrane segment at 288–309 (IKKWVLIGGLIGGLCGLLGLMQ) threads the bilayer. At 310-329 (PSAVGGGFNLIPIAAAGNFS) the chain is on the periplasmic side. A run of 2 helical transmembrane segments spans residues 330–349 (VGLL…ICFS) and 355–376 (GIFA…MAAI). Positions 355–359 (GIFAP) match the Selectivity filter part_3 motif. Isoleucine 356 and phenylalanine 357 together coordinate chloride. Residues 377–386 (PLFPAYHLDA) lie on the Periplasmic side of the membrane. The helical intramembrane region spans 387–401 (GTFAIAGMGALLAAS). Residues 402–404 (VRA) constitute an intramembrane region (note=Loop between two helices). The helical intramembrane region spans 405-416 (PLTGIVLVLEMT). The segment at residues 417 to 421 (DNYQL) is an intramembrane region (note=Loop between two helices). Residues 422 to 438 (ILPMIITCLGATLLAQF) traverse the membrane as a helical segment. Residues 439–472 (LGGKPLYSTILQRTLAKQEAEQAAKAQQAPRENT) are Cytoplasmic-facing. Tyrosine 445 contacts chloride.

It belongs to the chloride channel (TC 2.A.49) family. ClcA subfamily. In terms of assembly, homodimer.

The protein localises to the cell inner membrane. The catalysed reaction is 2 chloride(in) + H(+)(out) = 2 chloride(out) + H(+)(in). Proton-coupled chloride transporter. Functions as antiport system and exchanges two chloride ions for 1 proton. Probably acts as an electrical shunt for an outwardly-directed proton pump that is linked to amino acid decarboxylation, as part of the extreme acid resistance (XAR) response. The sequence is that of H(+)/Cl(-) exchange transporter ClcA from Klebsiella pneumoniae subsp. pneumoniae (strain ATCC 700721 / MGH 78578).